The following is a 432-amino-acid chain: Adenylosuccinate synthetase (432 aa).

GTP-binding positions include 13–19 (GDEGKGK) and 41–43 (GHT). The Proton acceptor role is filled by D14. Residues D14 and G41 each coordinate Mg(2+). IMP-binding positions include 14–17 (DEGK), 39–42 (NAGH), T130, R144, Q225, T240, and R304. H42 functions as the Proton donor in the catalytic mechanism. Residue 300–306 (ATTGRRR) coordinates substrate. GTP-binding positions include R306, 332 to 334 (KLD), and 415 to 417 (STG).

The protein belongs to the adenylosuccinate synthetase family. In terms of assembly, homodimer. The cofactor is Mg(2+).

The protein resides in the cytoplasm. The catalysed reaction is IMP + L-aspartate + GTP = N(6)-(1,2-dicarboxyethyl)-AMP + GDP + phosphate + 2 H(+). It participates in purine metabolism; AMP biosynthesis via de novo pathway; AMP from IMP: step 1/2. Its function is as follows. Plays an important role in the de novo pathway of purine nucleotide biosynthesis. Catalyzes the first committed step in the biosynthesis of AMP from IMP. This chain is Adenylosuccinate synthetase, found in Shigella flexneri serotype 5b (strain 8401).